A 314-amino-acid polypeptide reads, in one-letter code: MAGNSQRRGAVRKAGTKKGPQVGSGGVRRRGLEGRGATPPAHERPHHPAGKRAAKAARQAQGRHKKTDDTEIVLGRNPVVECLRAGVPATALYVALGTDADERLTESVQMAADRGISILEVQRHDLDRMAANGLHQGIALQVPPYAYAHPDDLLRDAKSDAAPALLVALDNISDPRNLGAIVRSVAAFGGHGVVLPQRRSASVTAVAWRTSAGAAARTPVARATNLNRTLKQYADAGLQVVGLDAGGDTTIDEIDGLTPTIVVVGSEGKGLSRLVRENCDRIVSIPMAGPTESLNASVAAGVVLAEIARQRRLS.

The interval Met1–Thr70 is disordered. A compositionally biased stretch (basic residues) spans Arg44 to Lys65. Gly265, Ile285, and Leu294 together coordinate S-adenosyl-L-methionine.

This sequence belongs to the class IV-like SAM-binding methyltransferase superfamily. RNA methyltransferase TrmH family.

This is an uncharacterized protein from Mycolicibacterium gilvum (strain PYR-GCK) (Mycobacterium gilvum (strain PYR-GCK)).